Reading from the N-terminus, the 452-residue chain is MELSRRICLVRLWLLLLSFLLGFSAGSAIDWREPEGKEVWDYVTVRKDAHMFWWLYYATNPCKNFSELPLVMWLQGGPGGSSTGFGNFEEIGPLDTQLKPRNTTWLQWASLLFVDNPVGTGFSYVNTTDAYAKDLDTVASDMMVLLKSFFDCHKEFQTVPFYIFSESYGGKMAAGISVELYKAVQQGTIKCNFSGVALGDSWISPVDSVLSWGPYLYSMSLLDNQGLAEVSDIAEQVLDAVNKGFYKEATQLWGKAEMIIEKNTDGVNFYNILTKSSPEKAMESSLEFLRSPLVRLCQRHVRHLQGDALSQLMNGPIKKKLKIIPEDISWGAQASYVFLSMEGDFMKPAIDVVDKLLAAGVNVTVYNGQLDLIVDTIGQESWVQKLKWPQLSKFNQLKWKALYTDPKSSETAAFVKSYENLAFYWILKAGHMVPSDQGEMALKMMKLVTKQE.

The N-terminal stretch at 1–28 is a signal peptide; that stretch reads MELSRRICLVRLWLLLLSFLLGFSAGSA. N-linked (GlcNAc...) asparagine glycans are attached at residues Asn-64, Asn-102, and Asn-126. The active site involves Ser-167. Asn-192 and Asn-362 each carry an N-linked (GlcNAc...) asparagine glycan. Residues Asp-371 and His-431 contribute to the active site.

Belongs to the peptidase S10 family.

The protein localises to the secreted. Functionally, may be involved in vascular wall and kidney homeostasis. This Mus musculus (Mouse) protein is Retinoid-inducible serine carboxypeptidase (Scpep1).